The sequence spans 187 residues: Putative manganese efflux pump MntP (187 aa).

6 helical membrane-spanning segments follow: residues 3–23, 41–61, 62–82, 106–128, 142–162, and 167–187; these read LSAT…ASIG, LIFG…GLLA, TQFV…FLGG, LLVT…LAFL, ATLI…PLLG, and ILGG…HFAG.

Belongs to the MntP (TC 9.B.29) family.

It localises to the cell inner membrane. Its function is as follows. Probably functions as a manganese efflux pump. The sequence is that of Putative manganese efflux pump MntP from Cronobacter sakazakii (strain ATCC BAA-894) (Enterobacter sakazakii).